A 614-amino-acid chain; its full sequence is MPITNTDESLSAASAPLKPGAFLHEIFSDRARQFPERTAVSDAARTLSYAQLDALSTKLAARLRDEGVTYGTRVGMYLPRSVDLVTSLLGILKAGGTYVPVDPQYPGKRVEHIVRDSELSLIIGDAANLPKISSLRVLALDELLSAPALQPAAQDTRIDPNNSTAYIIYTSGSTGEPKGVQVSHGNVSRLLESTQRAYGFNAQDVWSMFHSIGFDFSVWEIWGALAHGGQVAVVPYDISRSPAALRQWLADQRITVLSQTPSAFRGLDEADRGNTAPLALRYVVLGGEALPASVLRPWVERHGDQKPALINMYGITEATVHTTFKRVLAQDLETAAMVSLGKPLDGWRLHLLDANQAPVAAGTTGELYIEGAGVAQGYLNREALNVERFVELPGAVRAYRTGDLMTLESNGEYRYAGRCDEQLKISGFRIEPGEIEASLQTSPSVAAAHVGVHDYGDGDLRLVAYVVPGQGVDAWTEQARSEVAALMAENLPGYMRPSVYVPLAELPVTHHGKIDKQQLPSPAAGTALSGAADVKGLSEQEHFVLKVWSEDLGLKNIGVNDDFFDSGGTSLALIRSLSKLKTHYKINLDPGILADGATAKVLADHITRSLVQAH.

The Carrier domain occupies 535–610; that stretch reads KGLSEQEHFV…VLADHITRSL (76 aa). At serine 570 the chain carries O-(pantetheine 4'-phosphoryl)serine.

The protein belongs to the ATP-dependent AMP-binding enzyme family. The cofactor is pantetheine 4'-phosphate.

It catalyses the reaction holo-[peptidyl-carrier protein] + L-threonine + ATP = L-threonyl-[peptidyl-carrier protein] + AMP + diphosphate. Functionally, involved in the biosynthesis of syringomycin E, a cyclic lipodepsinonapeptide toxin with phytotoxic activity. Specifically adenylates L-threonine and loads it onto its peptidyl carrier domain, via a thioester linkage to the phosphopanthetheine moiety. Is highly specific for L-threonine. This is Syringomycin synthase SyrB1 from Pseudomonas syringae pv. syringae.